A 218-amino-acid polypeptide reads, in one-letter code: Glutathione S-transferase Y1 (218 aa).

Positions 2–88 constitute a GST N-terminal domain; sequence PMILGYWNVR…YIARKHNLCG (87 aa). Residues 7-8, 46-50, 59-60, and 72-73 each bind glutathione; these read YW, WLNEK, NL, and QS. In terms of domain architecture, GST C-terminal spans 90-208; sequence TEEERIRVDI…KTSRFLRRPI (119 aa). Tyrosine 116 contacts substrate.

Belongs to the GST superfamily. Mu family. As to quaternary structure, homodimer.

Its subcellular location is the cytoplasm. The catalysed reaction is RX + glutathione = an S-substituted glutathione + a halide anion + H(+). Conjugation of reduced glutathione to a wide number of exogenous and endogenous hydrophobic electrophiles. This chain is Glutathione S-transferase Y1, found in Cricetulus longicaudatus (Long-tailed dwarf hamster).